Reading from the N-terminus, the 1108-residue chain is Retinal guanylyl cyclase 2 (1108 aa).

The signal sequence occupies residues 1 to 50 (MFLGLGRFSRLVLWFAAFRKLLGHHGLASAKFLWCLCLLSVMSLPQQVWT). Topologically, residues 51 to 467 (LPYKIGVVGP…KICHGGIDPA (417 aa)) are extracellular. A disulfide bridge links Cys104 with Cys132. The chain crosses the membrane as a helical span at residues 468 to 490 (FAMMVCLTLLIALLSINGFAYFI). Residues 491–1108 (RRRINKIQLI…AERQLVRNKP (618 aa)) lie on the Cytoplasmic side of the membrane. The Protein kinase domain maps to 532-812 (FQITSEVQSG…DEIFNQFKTF (281 aa)). The 131-residue stretch at 884 to 1014 (TLYFSDIVGF…DTVNTASRME (131 aa)) folds into the Guanylate cyclase domain.

Belongs to the adenylyl cyclase class-4/guanylyl cyclase family. Homodimer. Interacts with RD3; promotes the exit of GUCY2F from the endoplasmic reticulum and its trafficking to the photoreceptor outer segments. Post-translationally, there are 9 conserved cysteine residues in sensory guanylate cyclases, 6 in the extracellular domain, which may be involved in intra- or interchain disulfide bonds. As to expression, retina. Localized exclusively in the outer nuclear layer and inner segments of the rod and cone photoreceptor cells.

The protein localises to the photoreceptor outer segment membrane. The enzyme catalyses GTP = 3',5'-cyclic GMP + diphosphate. Activated by GUCA1B when free calcium ions concentration is low, and inhibited by GUCA1B when free calcium ions concentration is high. Inhibited by RD3. Functionally, responsible for the synthesis of cyclic GMP (cGMP) in rods and cones of photoreceptors. Plays an essential role in phototransduction, by mediating cGMP replenishment. May also participate in the trafficking of membrane-asociated proteins to the photoreceptor outer segment membrane. This chain is Retinal guanylyl cyclase 2 (GUCY2F), found in Homo sapiens (Human).